The chain runs to 244 residues: Orotidine 5'-phosphate decarboxylase (244 aa).

Residues Asp10, Lys32, 59–68 (DLKLHDIPNT), Thr122, Arg184, Gln193, Gly213, and Arg214 contribute to the substrate site. The Proton donor role is filled by Lys61.

Belongs to the OMP decarboxylase family. Type 1 subfamily. In terms of assembly, homodimer.

It carries out the reaction orotidine 5'-phosphate + H(+) = UMP + CO2. Its pathway is pyrimidine metabolism; UMP biosynthesis via de novo pathway; UMP from orotate: step 2/2. In terms of biological role, catalyzes the decarboxylation of orotidine 5'-monophosphate (OMP) to uridine 5'-monophosphate (UMP). The protein is Orotidine 5'-phosphate decarboxylase of Bacillus caldolyticus.